The sequence spans 898 residues: Phosphoenolpyruvate carboxylase (898 aa).

Active-site residues include His138 and Lys561.

Belongs to the PEPCase type 1 family. It depends on Mg(2+) as a cofactor.

It catalyses the reaction oxaloacetate + phosphate = phosphoenolpyruvate + hydrogencarbonate. Functionally, forms oxaloacetate, a four-carbon dicarboxylic acid source for the tricarboxylic acid cycle. In Streptococcus pneumoniae serotype 2 (strain D39 / NCTC 7466), this protein is Phosphoenolpyruvate carboxylase.